The following is a 103-amino-acid chain: Nucleoid-associated protein NIS_0256 (103 aa).

Belongs to the YbaB/EbfC family. As to quaternary structure, homodimer.

Its subcellular location is the cytoplasm. The protein resides in the nucleoid. Binds to DNA and alters its conformation. May be involved in regulation of gene expression, nucleoid organization and DNA protection. The polypeptide is Nucleoid-associated protein NIS_0256 (Nitratiruptor sp. (strain SB155-2)).